We begin with the raw amino-acid sequence, 340 residues long: KH domain-containing RNA-binding protein QKI (340 aa).

The 67-residue stretch at 87–153 (YVPVKEYPDF…WEHLNEDLHV (67 aa)) folds into the KH domain. Residues 275–278 (PPGP) carry the SH3-binding motif. Residues 323-329 (RVHPYQR) carry the Nuclear localization signal motif.

The protein belongs to the quaking family. As to quaternary structure, homodimer; does not require RNA to homodimerize.

It is found in the cytoplasm. It localises to the nucleus. In terms of biological role, RNA reader protein, which recognizes and binds specific RNAs, thereby regulating RNA metabolic processes, such as pre-mRNA splicing, circular RNA (circRNA) formation, mRNA export, mRNA stability and/or translation. Involved in various cellular processes, such as mRNA storage into stress granules, apoptosis, interferon response, glial cell fate and development. Binds to the 5'-NACUAAY-N(1,20)-UAAY-3' RNA core sequence. Acts as a mRNA modification reader that specifically recognizes and binds mRNA transcripts modified by internal N(7)-methylguanine (m7G). Promotes the formation of circular RNAs (circRNAs): acts by binding to sites flanking circRNA-forming exons. CircRNAs are produced by back-splicing circularization of pre-mRNAs. Required to protect and promote stability of mRNAs which promotes oligodendrocyte differentiation. Acts as an important regulator of muscle development. The polypeptide is KH domain-containing RNA-binding protein QKI (Gallus gallus (Chicken)).